The chain runs to 268 residues: AB hydrolase superfamily protein YisY (268 aa).

The region spanning 23-254 is the AB hydrolase-1 domain; the sequence is PIIFLHGWPL…NSGHGAFYEE (232 aa). Residues Ser96, Asp220, and His248 contribute to the active site.

Belongs to the AB hydrolase superfamily.

The protein is AB hydrolase superfamily protein YisY (yisY) of Bacillus subtilis (strain 168).